We begin with the raw amino-acid sequence, 431 residues long: Serine--tRNA ligase (431 aa).

Residue Thr-237–Glu-239 participates in L-serine binding. Arg-268–Glu-270 contributes to the ATP binding site. Residue Glu-291 participates in L-serine binding. Glu-355 to Ser-358 provides a ligand contact to ATP. Ser-390 provides a ligand contact to L-serine.

Belongs to the class-II aminoacyl-tRNA synthetase family. Type-1 seryl-tRNA synthetase subfamily. In terms of assembly, homodimer. The tRNA molecule binds across the dimer.

It is found in the cytoplasm. The enzyme catalyses tRNA(Ser) + L-serine + ATP = L-seryl-tRNA(Ser) + AMP + diphosphate + H(+). It carries out the reaction tRNA(Sec) + L-serine + ATP = L-seryl-tRNA(Sec) + AMP + diphosphate + H(+). Its pathway is aminoacyl-tRNA biosynthesis; selenocysteinyl-tRNA(Sec) biosynthesis; L-seryl-tRNA(Sec) from L-serine and tRNA(Sec): step 1/1. Its function is as follows. Catalyzes the attachment of serine to tRNA(Ser). Is also able to aminoacylate tRNA(Sec) with serine, to form the misacylated tRNA L-seryl-tRNA(Sec), which will be further converted into selenocysteinyl-tRNA(Sec). The polypeptide is Serine--tRNA ligase (Neisseria gonorrhoeae (strain NCCP11945)).